Reading from the N-terminus, the 448-residue chain is MLWLALGPFRAMENQVLVIRIKIPNSGAVDWTVHSGPQLLFRDVLDVIGQVLPEATTTAFEYEDEDGDRITVRSDEEMKAMLSYYYSTVMEQQVNGQLIEPLQIFPRACKPPGERNIHGLKVNTRAGPSQHTSPVVSDSLPSNSLKKSSAELRKILANGQMNEQDIRYRDTLGHGNGGTVYKAYHVPSGKILAVKVILLDITLELQKQIMSELEILYKCDSSYIIGFYGAFFVENRISICTEFMDGGSLDVYRKIPEHVLGRIAVAVVKGLTYLWSLKILHRDVKPSNMLVNTSGQVKLCDFGVSTQLVNSIAKTYVGTNAYMAPERISGEQYGIHSDVWSLGISFMELALGRFPYPQIQKNQGSLMPLQLLQCIVDEDSPVLPLGEFSEPFVHFITQCMRKQPKERPAPEELMGHPFIVQFNDGNATVVSMWVCRALEERRSQQGPP.

The segment at 18–25 (VIRIKIPN) is interaction with MAPK7. The PB1 domain maps to 18-109 (VIRIKIPNSG…EPLQIFPRAC (92 aa)). The interval 64–68 (DEDGD) is interaction with MAP3K2/MAP3K3. The disordered stretch occupies residues 116-144 (NIHGLKVNTRAGPSQHTSPVVSDSLPSNS). Positions 117-131 (IHGLKVNTRAGPSQH) are interaction with MAPK7. Over residues 126-144 (AGPSQHTSPVVSDSLPSNS) the composition is skewed to polar residues. The Protein kinase domain maps to 166 to 419 (IRYRDTLGHG…PEELMGHPFI (254 aa)). ATP-binding positions include 172–180 (LGHGNGGTV) and Lys-195. Residue Asp-283 is the Proton acceptor of the active site. Ser-311 is modified (phosphoserine). Phosphothreonine is present on Thr-315.

The protein belongs to the protein kinase superfamily. STE Ser/Thr protein kinase family. MAP kinase kinase subfamily. Interacts with PARD6A, MAP3K3 and MAPK7. Forms a complex with SQSTM1 and PRKCZ or PRKCI. Mg(2+) serves as cofactor. Post-translationally, activated by phosphorylation on Ser/Thr by MAP kinase kinase kinases. Expressed in the liver and brain (at protein level). As to expression, expressed in the liver, muscle, testes, lung, kidney, spleen, heart and brain (at protein level).

The protein resides in the cytoplasm. It localises to the cytosol. The protein localises to the membrane. The catalysed reaction is L-seryl-[protein] + ATP = O-phospho-L-seryl-[protein] + ADP + H(+). It carries out the reaction L-threonyl-[protein] + ATP = O-phospho-L-threonyl-[protein] + ADP + H(+). The enzyme catalyses L-tyrosyl-[protein] + ATP = O-phospho-L-tyrosyl-[protein] + ADP + H(+). Acts as a scaffold for the formation of a ternary MAP3K2/MAP3K3-MAP3K5-MAPK7 signaling complex. Activation of this pathway appears to play a critical role in protecting cells from stress-induced apoptosis, neuronal survival and cardiac development and angiogenesis. As part of the MAPK/ERK signaling pathway, acts as a negative regulator of apoptosis in cardiomyocytes via promotion of STUB1/CHIP-mediated ubiquitination and degradation of ICER-type isoforms of CREM. The protein is Dual specificity mitogen-activated protein kinase kinase 5 (Map2k5) of Rattus norvegicus (Rat).